The sequence spans 479 residues: Something about silencing protein 10 (479 aa).

Positions 1-10 are enriched in basic residues; that stretch reads MVGRSRRRGA. 2 disordered regions span residues 1–45 and 62–166; these read MVGR…SYYQ and KGWN…EEAQ. R8 is subject to Omega-N-methylarginine. Low complexity predominate over residues 11-21; it reads AKWAAVRAKAG. S37 carries the post-translational modification Phosphoserine. The segment covering 69–111 has biased composition (acidic residues); sequence SGDEEDGEEEEEEVLALDMDDEDDEDGGNAGEEEEEENADDDG. The residue at position 144 (K144) is an N6-acetyllysine; alternate. Residue K144 forms a Glycyl lysine isopeptide (Lys-Gly) (interchain with G-Cter in SUMO2); alternate linkage. S150 bears the Phosphoserine mark. Positions 153–165 are enriched in acidic residues; it reads EAEEEEREEEEEA. At T362 the chain carries Phosphothreonine. Phosphoserine is present on residues S365 and S368. A Citrulline modification is found at R385. Residues 419 to 466 are disordered; it reads RGLTPRRKKIDRNPRVKHREKFRRAKIRRRGQVREVRKEEQRYSGELS. Residues 422 to 449 are compositionally biased toward basic residues; the sequence is TPRRKKIDRNPRVKHREKFRRAKIRRRG. Positions 450–461 are enriched in basic and acidic residues; sequence QVREVRKEEQRY.

It belongs to the SAS10 family. In terms of assembly, part of the small subunit (SSU) processome, composed of more than 70 proteins and the RNA chaperone small nucleolar RNA (snoRNA) U3. Post-translationally, citrullinated by PADI4.

Its subcellular location is the nucleus. It is found in the nucleolus. Essential for gene silencing: has a role in the structure of silenced chromatin. Plays a role in the developing brain. Part of the small subunit (SSU) processome, first precursor of the small eukaryotic ribosomal subunit. During the assembly of the SSU processome in the nucleolus, many ribosome biogenesis factors, an RNA chaperone and ribosomal proteins associate with the nascent pre-rRNA and work in concert to generate RNA folding, modifications, rearrangements and cleavage as well as targeted degradation of pre-ribosomal RNA by the RNA exosome. The sequence is that of Something about silencing protein 10 from Homo sapiens (Human).